A 466-amino-acid polypeptide reads, in one-letter code: Amino acid permease 4 (466 aa).

At 1–22 the chain is on the cytoplasmic side; the sequence is MDVPRPAFKCFDDDGRLKRSGT. Helical transmembrane passes span 23 to 43 and 44 to 64; these read VWTA…LSLA and WAIG…FSFV. Topologically, residues 65 to 111 are cytoplasmic; the sequence is TYYSSTLLSDCYRTGDPVSGKRNYTYMDAVRSILGGFRFKICGLIQY. A helical membrane pass occupies residues 112–132; sequence LNLFGITVGYTIAASISMMAI. At 133-177 the chain is on the extracellular side; sequence KRSNCFHESGGKNPCHMSSNPYMIMFGVTEILLSQIKDFDQIWWL. The chain crosses the membrane as a helical span at residues 178 to 198; it reads SIVAAIMSFTYSAIGLALGII. The Cytoplasmic segment spans residues 199–226; that stretch reads QVAANGVVKGSLTGISIGAVTQTQKIWR. The helical transmembrane segment at 227-247 threads the bilayer; it reads TFQALGDIAFAYSYSVVLIEI. Residues 248 to 266 lie on the Extracellular side of the membrane; it reads QDTVRSPPAESKTMKIATR. Residues 267–287 traverse the membrane as a helical segment; the sequence is ISIAVTTTFYMLCGCMGYAAF. Over 288–290 the chain is Cytoplasmic; sequence GDK. Residues 291-311 form a helical membrane-spanning segment; the sequence is APGNLLTGFGFYNPFWLLDVA. The Extracellular segment spans residues 312–313; that stretch reads NA. The helical transmembrane segment at 314–334 threads the bilayer; the sequence is AIVIHLVGAYQVFAQPIFAFI. Residues 335 to 369 are Cytoplasmic-facing; sequence EKQAAARFPDSDLVTKEYEIRIPGFRSPYKVNVFR. Residues 370–390 traverse the membrane as a helical segment; that stretch reads AVYRSGFVVLTTVISMLMPFF. The Extracellular portion of the chain corresponds to 391 to 392; it reads ND. Residues 393–413 form a helical membrane-spanning segment; sequence VVGILGALGFWPLTVYFPVEM. Topologically, residues 414–435 are cytoplasmic; sequence YIRQRKVERWSMKWVCLQMLSC. A helical transmembrane segment spans residues 436–456; the sequence is GCLMITLVAGVGSIAGVMLDL. At 457-466 the chain is on the extracellular side; sequence KVYKPFKTTY.

The protein belongs to the amino acid/polyamine transporter 2 family. Amino acid/auxin permease (AAAP) (TC 2.A.18.2) subfamily. As to expression, expressed in leaves, stems and flowers.

It localises to the cell membrane. Inhibited by 2,4-dinitrophenol. Functionally, amino acid-proton symporter. Stereospecific transporter with a broad specificity for neutral amino acids, favoring small amino acids such as alanine, asparagine and glutamine. Also accepts large aromatic residues such as in phenlalanine or tyrosine. The chain is Amino acid permease 4 (AAP4) from Arabidopsis thaliana (Mouse-ear cress).